A 437-amino-acid polypeptide reads, in one-letter code: Phosphomethylpyrimidine synthase (437 aa).

Substrate contacts are provided by residues asparagine 69, methionine 98, tyrosine 127, histidine 163, 185–187 (SRG), 226–229 (DACR), and glutamate 265. Residue histidine 269 coordinates Zn(2+). Residue tyrosine 292 participates in substrate binding. Histidine 333 is a binding site for Zn(2+). Positions 409, 412, and 416 each coordinate [4Fe-4S] cluster.

Belongs to the ThiC family. The cofactor is [4Fe-4S] cluster.

It carries out the reaction 5-amino-1-(5-phospho-beta-D-ribosyl)imidazole + S-adenosyl-L-methionine = 4-amino-2-methyl-5-(phosphooxymethyl)pyrimidine + CO + 5'-deoxyadenosine + formate + L-methionine + 3 H(+). It participates in cofactor biosynthesis; thiamine diphosphate biosynthesis. Functionally, catalyzes the synthesis of the hydroxymethylpyrimidine phosphate (HMP-P) moiety of thiamine from aminoimidazole ribotide (AIR) in a radical S-adenosyl-L-methionine (SAM)-dependent reaction. In Clostridium botulinum (strain 657 / Type Ba4), this protein is Phosphomethylpyrimidine synthase.